A 782-amino-acid polypeptide reads, in one-letter code: uncharacterized protein (782 aa).

The helical transmembrane segment at 10-30 threads the bilayer; sequence LLTITIGAVAVSSILLGGIFY. Basic and acidic residues predominate over residues 57–76; sequence LDYQKARPSIKDSNLKEIPK. The segment at 57–171 is disordered; the sequence is LDYQKARPSI…PQPQQVPNNS (115 aa). Pro residues predominate over residues 77–97; sequence PKPQPKPKPQPTPFPDPIPTP. Basic and acidic residues predominate over residues 98–124; that stretch reads PKKEELKKPDIKPEEPKKPEIKPEPKP. Residues 125–135 are compositionally biased toward pro residues; sequence EPIPQPAPPIE.

To U.parvum UU046.

The protein resides in the membrane. This is an uncharacterized protein from Ureaplasma parvum serovar 3 (strain ATCC 700970).